A 117-amino-acid polypeptide reads, in one-letter code: Large ribosomal subunit protein uL18 (117 aa).

Belongs to the universal ribosomal protein uL18 family. In terms of assembly, part of the 50S ribosomal subunit; part of the 5S rRNA/L5/L18/L25 subcomplex. Contacts the 5S and 23S rRNAs.

In terms of biological role, this is one of the proteins that bind and probably mediate the attachment of the 5S RNA into the large ribosomal subunit, where it forms part of the central protuberance. In Mycoplasma mobile (strain ATCC 43663 / 163K / NCTC 11711) (Mesomycoplasma mobile), this protein is Large ribosomal subunit protein uL18.